A 264-amino-acid chain; its full sequence is tRNA (guanine-N(1)-)-methyltransferase (264 aa).

S-adenosyl-L-methionine-binding positions include Gly-125 and 145–150 (LGDFVL).

It belongs to the RNA methyltransferase TrmD family. Homodimer.

It is found in the cytoplasm. It catalyses the reaction guanosine(37) in tRNA + S-adenosyl-L-methionine = N(1)-methylguanosine(37) in tRNA + S-adenosyl-L-homocysteine + H(+). In terms of biological role, specifically methylates guanosine-37 in various tRNAs. The polypeptide is tRNA (guanine-N(1)-)-methyltransferase (Burkholderia lata (strain ATCC 17760 / DSM 23089 / LMG 22485 / NCIMB 9086 / R18194 / 383)).